The primary structure comprises 383 residues: MAGIPGLLILLLVLLCVFMQVSPYNVPWKPTWPAYRLPIVLPQSTLKLAKPDFDAKAKLEVSSSCGPQCHKGTPLPTYEEAKQYLSYETLYANGSRTETQVGIYILSNGEGRARSRDSEAAGKSRRKRQIYGYDGRFSIFGKDFLLNYPFSTSVKLSTGCTGTLVAEKHVLTAAHCIHDGKTYVKGTQKLRVGFLKPKYKDGAGGDNSSSSALVEKMKFQWIRVKRTHVPKGWIKGNANDIGMDYDYALLELKKPHKRKFMKIGVSPPAKQLPGGRIHFSGYDNDRPGNLVYRFCDVKDETYDLLYQQCDAQPGASGSGVYVRMWKRPQQKWERKIIGIFSGHQWVDMNGSPQDFNVAVRITPLKYAQICYWIKGNYLDCREG.

The N-terminal stretch at 1-23 is a signal peptide; it reads MAGIPGLLILLLVLLCVFMQVSP. N-linked (GlcNAc...) asparagine glycosylation occurs at Asn-93. An intrachain disulfide couples Cys-160 to Cys-176. The active-site Charge relay system is His-175. Asn-207 carries N-linked (GlcNAc...) asparagine glycosylation. Active-site charge relay system residues include Asp-240 and Ser-316.

It belongs to the peptidase S1 family.

It localises to the secreted. This is Serine protease 23 (Prss23) from Rattus norvegicus (Rat).